Reading from the N-terminus, the 21-residue chain is Large ribosomal subunit protein uL29 (21 aa).

Belongs to the universal ribosomal protein uL29 family.

This Brevundimonas diminuta (Pseudomonas diminuta) protein is Large ribosomal subunit protein uL29 (rpmC).